A 332-amino-acid polypeptide reads, in one-letter code: Stage II sporulation protein B (332 aa).

The span at 1-10 shows a compositional bias: basic residues; sequence MKKRKNKKNS. The interval 1 to 71 is disordered; sequence MKKRKNKKNS…EHPDEDEFNW (71 aa). Over residues 11–27 the composition is skewed to basic and acidic residues; the sequence is KAAEKALKVTINGKEET. The chain crosses the membrane as a helical span at residues 112–132; the sequence is AATIAFAAVIGTGLGLFALNI. The segment at 139–174 is disordered; that stretch reads SAPASLEDSLGSQTAKAGDTSADKQTSGAEKQAAQT. Residues 161-174 are compositionally biased toward polar residues; the sequence is DKQTSGAEKQAAQT. One can recognise an SPOR domain in the interval 175–250; the sequence is EGTYKTYAVQ…SDFEAWGGKE (76 aa).

It is found in the cell membrane. Appears to be degraded early in engulfment, in correlation with its loss from polar septa. In terms of biological role, facilitates the rapid and spatially regulated dissolution of septal peptidoglycan. The chain is Stage II sporulation protein B from Bacillus subtilis (strain 168).